Consider the following 165-residue polypeptide: Ribosome maturation factor RimM (165 aa).

A PRC barrel domain is found at 90–161 (EDEYFIVDLV…LITIRPSGEW (72 aa)).

This sequence belongs to the RimM family. As to quaternary structure, binds ribosomal protein uS19.

The protein resides in the cytoplasm. In terms of biological role, an accessory protein needed during the final step in the assembly of 30S ribosomal subunit, possibly for assembly of the head region. Essential for efficient processing of 16S rRNA. May be needed both before and after RbfA during the maturation of 16S rRNA. It has affinity for free ribosomal 30S subunits but not for 70S ribosomes. The protein is Ribosome maturation factor RimM of Clostridium perfringens (strain SM101 / Type A).